Reading from the N-terminus, the 246-residue chain is Agamous-like MADS-box protein AGL5 (246 aa).

The MADS-box domain occupies 18 to 72; it reads RGKIEIKRIENTTNRQVTFCKRRNGLLKKAYELSVLCDAEVALVIFSTRGRLYEY. The K-box domain maps to 102-192; that stretch reads TQYYQQEASK…RSKITERTGL (91 aa).

As to quaternary structure, interacts with AGL15 and AGL16.

The protein localises to the nucleus. Its function is as follows. Probable transcription factor. Interacts genetically with TT16/AGL32 in a partially antagonistic manner during flower development. Is essential for the coordination of cell divisions in ovule, seed coat development and endosperm formation. In Arabidopsis thaliana (Mouse-ear cress), this protein is Agamous-like MADS-box protein AGL5 (AGL5).